A 3014-amino-acid polypeptide reads, in one-letter code: Cadherin EGF LAG seven-pass G-type receptor 1 (3014 aa).

A signal peptide spans 1–20; sequence MAPPPPPVLPVLLLLAAAAA. The Extracellular portion of the chain corresponds to 22-2469; the sequence is PAMGLRAAAW…RENGEVLPLK (2448 aa). The disordered stretch occupies residues 205–242; it reads AGTPSASPSPSPPLPPNLPEARAGPARRARRGTSGRGS. Residues 211–222 are compositionally biased toward pro residues; it reads SPSPSPPLPPNL. 9 Cadherin domains span residues 246–353, 354–459, 460–565, 566–687, 688–789, 790–892, 893–999, 1000–1101, and 1106–1224; these read PMPN…SPVF, EQSE…YPQF, SEQN…EPIF, VSSP…DPVF, TQPT…RPVF, QSSH…APQF, LWDF…APMF, EKDE…PPVL, and ILFN…SPLL. N-linked (GlcNAc...) asparagine glycans are attached at residues asparagine 403, asparagine 546, asparagine 634, and asparagine 778. 6 N-linked (GlcNAc...) asparagine glycosylation sites follow: asparagine 1114, asparagine 1139, asparagine 1213, asparagine 1249, asparagine 1259, and asparagine 1287. An EGF-like 1; calcium-binding domain is found at 1303 to 1361; sequence DDNICLREPCENYMKCVSVLRFDSSAPFLSSTTVLFRPIHPINGLRCRCPPGFTGDYCE. 9 cysteine pairs are disulfide-bonded: cysteine 1307-cysteine 1318, cysteine 1312-cysteine 1349, cysteine 1351-cysteine 1360, cysteine 1367-cysteine 1378, cysteine 1372-cysteine 1387, cysteine 1389-cysteine 1398, cysteine 1407-cysteine 1418, cysteine 1412-cysteine 1428, and cysteine 1430-cysteine 1440. In terms of domain architecture, EGF-like 2; calcium-binding spans 1363–1399; the sequence is EIDLCYSDPCGANGRCRSREGGYTCECFEDFTGEHCE. Residues 1403–1441 enclose the EGF-like 3; calcium-binding domain; the sequence is RSGRCANGVCKNGGTCVNLLIGGFHCVCPPGEYERPYCE. One can recognise a Laminin G-like 1 domain in the interval 1442–1646; that stretch reads VTTRSFPPQS…IANNGTREGC (205 aa). 3 N-linked (GlcNAc...) asparagine glycosylation sites follow: asparagine 1576, asparagine 1623, and asparagine 1640. Cystine bridges form between cysteine 1620/cysteine 1646, cysteine 1653/cysteine 1664, cysteine 1658/cysteine 1673, cysteine 1675/cysteine 1684, cysteine 1840/cysteine 1870, cysteine 1876/cysteine 1887, cysteine 1881/cysteine 1896, cysteine 1898/cysteine 1907, cysteine 1911/cysteine 1922, cysteine 1916/cysteine 1934, cysteine 1936/cysteine 1945, cysteine 1953/cysteine 1966, and cysteine 1968/cysteine 1978. An EGF-like 4; calcium-binding domain is found at 1649–1685; the sequence is RRNFCDGRRCQNGGTCVNRWNMYLCECPLRFGGKNCE. Asparagine 1666 carries the post-translational modification (3R)-3-hydroxyasparagine. One can recognise a Laminin G-like 2 domain in the interval 1689–1870; sequence PHPQLFSGES…ALKVRVKDGC (182 aa). The region spanning 1872-1907 is the EGF-like 5; calcium-binding domain; it reads VDDPCTSSPCPPNSRCHDAWEDYSCVCDKGYLGINC. Position 1889 is a (3R)-3-hydroxyaspartate (aspartate 1889). The 39-residue stretch at 1908–1946 folds into the EGF-like 6; calcium-binding domain; the sequence is VDACHLNPCENMGACVRSPGSPQGYVCECGPSHYGPYCE. The 33-residue stretch at 1947–1979 folds into the EGF-like 7; calcium-binding domain; it reads NKLDLPCPRGWWGNPVCGPCHCAVSKGFDPDCN. N-linked (GlcNAc...) asparagine glycosylation is present at asparagine 1979. One can recognise an EGF-like 8; calcium-binding domain in the interval 1981–2016; the sequence is TNGQCQCKENYYKLLAQDTCLPCDCFPHGSHSRTCD. 5 cysteine pairs are disulfide-bonded: cysteine 1985/cysteine 2000, cysteine 1987/cysteine 2003, cysteine 2005/cysteine 2015, cysteine 2024/cysteine 2033, and cysteine 2036/cysteine 2048. One can recognise a Laminin EGF-like domain in the interval 2003–2050; the sequence is CDCFPHGSHSRTCDMATGQCACKPGVIGRQCNRCDNPFAEVTTLGCEV. Asparagine 2103, asparagine 2122, and asparagine 2257 each carry an N-linked (GlcNAc...) asparagine glycan. The segment at 2291–2328 is disordered; sequence PEEKEGPLLRPAGRRTTPQTTRPGPGTEREAPISRRRR. The GAIN-B domain maps to 2297–2461; sequence PLLRPAGRRT…AVLMDISRRE (165 aa). The span at 2300–2316 shows a compositional bias: low complexity; it reads RPAGRRTTPQTTRPGPG. 2 disulfides stabilise this stretch: cysteine 2411-cysteine 2443 and cysteine 2431-cysteine 2445. Residues 2411–2461 form a GPS region; sequence CVFWNHSLAVGGTGGWSARGCELLSRNRTHVACQCSHTASFAVLMDISRRE. N-linked (GlcNAc...) asparagine glycosylation is found at asparagine 2415 and asparagine 2437. A helical membrane pass occupies residues 2470 to 2490; the sequence is IVTYAAVSLSLAALLVAFVLL. The Cytoplasmic portion of the chain corresponds to 2491-2501; sequence SLVRMLRSNLH. A helical membrane pass occupies residues 2502 to 2522; the sequence is SIHKHLAVALFLSQLVFVIGI. Asparagine 2523 carries N-linked (GlcNAc...) asparagine glycosylation. Residues 2523–2527 lie on the Extracellular side of the membrane; that stretch reads NQTEN. The helical transmembrane segment at 2528–2548 threads the bilayer; sequence PFLCTVVAILLHYIYMSTFAW. Residues 2549-2572 are Cytoplasmic-facing; sequence TLVESLHVYRMLTEVRNIDTGPMR. The helical transmembrane segment at 2573–2593 threads the bilayer; the sequence is FYYVVGWGIPAIVTGLAVGLD. Residues 2594–2611 lie on the Extracellular side of the membrane; the sequence is PQGYGNPDFCWLSLQDTL. A helical transmembrane segment spans residues 2612–2632; the sequence is IWSFAGPIGAVIIINTVTSVL. The Cytoplasmic portion of the chain corresponds to 2633–2655; that stretch reads SAKVSCQRKHHYYGKKGIVSLLR. A helical transmembrane segment spans residues 2656-2676; sequence TAFLLLLLISATWLLGLLAVN. At 2677–2683 the chain is on the extracellular side; sequence RDALSFH. A helical transmembrane segment spans residues 2684–2704; the sequence is YLFAIFSGLQGPFVLLFHCVL. The Cytoplasmic portion of the chain corresponds to 2705-3014; sequence NQEVRKHLKG…QADGSDSEKP (310 aa). Phosphoserine is present on residues serine 2761 and serine 2764. Disordered regions lie at residues 2777–2939 and 2954–3014; these read SSGL…PPPL and LADC…SEKP. Residues 2796 to 2806 are compositionally biased toward basic and acidic residues; the sequence is SCKDPPGHDSD. Residues 2814–2825 show a composition bias toward low complexity; sequence DEQSSSYASSHS. Residues serine 2871 and serine 2873 each carry the phosphoserine modification. Residues 2876-2904 show a composition bias toward basic and acidic residues; it reads PSGKPRLKVETKVSVELHREEQGSHRGEY. Over residues 2960–2969 the composition is skewed to low complexity; the sequence is SPTSSRTSSL. A compositionally biased stretch (basic and acidic residues) spans 2983–2992; the sequence is PGREPGRDHL.

Belongs to the G-protein coupled receptor 2 family. LN-TM7 subfamily. Post-translationally, the iron and 2-oxoglutarate dependent 3-hydroxylation of aspartate and asparagine is (R) stereospecific within EGF domains.

The protein localises to the cell membrane. Receptor that may have an important role in cell/cell signaling during nervous system formation. This chain is Cadherin EGF LAG seven-pass G-type receptor 1 (CELSR1), found in Homo sapiens (Human).